The chain runs to 356 residues: Nicotinate-nucleotide--dimethylbenzimidazole phosphoribosyltransferase (356 aa).

The Proton acceptor role is filled by Glu317.

The protein belongs to the CobT family. Homodimer.

It carries out the reaction 5,6-dimethylbenzimidazole + nicotinate beta-D-ribonucleotide = alpha-ribazole 5'-phosphate + nicotinate + H(+). It participates in nucleoside biosynthesis; alpha-ribazole biosynthesis; alpha-ribazole from 5,6-dimethylbenzimidazole: step 1/2. Functionally, catalyzes the synthesis of alpha-ribazole-5'-phosphate from nicotinate mononucleotide (NAMN) and 5,6-dimethylbenzimidazole (DMB). The protein is Nicotinate-nucleotide--dimethylbenzimidazole phosphoribosyltransferase of Salmonella schwarzengrund (strain CVM19633).